The sequence spans 299 residues: Glycine--tRNA ligase alpha subunit (299 aa).

Belongs to the class-II aminoacyl-tRNA synthetase family. Tetramer of two alpha and two beta subunits.

The protein resides in the cytoplasm. It catalyses the reaction tRNA(Gly) + glycine + ATP = glycyl-tRNA(Gly) + AMP + diphosphate. In Lactiplantibacillus plantarum (strain ATCC BAA-793 / NCIMB 8826 / WCFS1) (Lactobacillus plantarum), this protein is Glycine--tRNA ligase alpha subunit.